Here is a 194-residue protein sequence, read N- to C-terminus: MNSIQMLVGLANPGPEYANTRHNAGAWFIEQLAARYNCTLKHDPKYHGLTGKVIIQDQEFKLLIPTTYMNLSGKAVGSLANFFKIPVESILVAHDELDLEPGVAKLKKGGGHGGHNGLKDIIAKMANQKDFMRLRIGVGHPGHREMVTGWVLGKAAKADQEKMDAAIDEAVRCMEILAKDGVLKAQNRLHSFKP.

Residue Tyr-17 participates in tRNA binding. The active-site Proton acceptor is His-22. TRNA is bound by residues Tyr-68, Asn-70, and Asn-116.

It belongs to the PTH family. Monomer.

The protein localises to the cytoplasm. The enzyme catalyses an N-acyl-L-alpha-aminoacyl-tRNA + H2O = an N-acyl-L-amino acid + a tRNA + H(+). In terms of biological role, hydrolyzes ribosome-free peptidyl-tRNAs (with 1 or more amino acids incorporated), which drop off the ribosome during protein synthesis, or as a result of ribosome stalling. Its function is as follows. Catalyzes the release of premature peptidyl moieties from peptidyl-tRNA molecules trapped in stalled 50S ribosomal subunits, and thus maintains levels of free tRNAs and 50S ribosomes. This chain is Peptidyl-tRNA hydrolase, found in Pseudoalteromonas translucida (strain TAC 125).